Reading from the N-terminus, the 338-residue chain is Lipoyl synthase (338 aa).

The disordered stretch occupies residues 1–22 (MTTVQEAVPNLIPTQDVTPRPA). Residues Cys-84, Cys-89, Cys-95, Cys-110, Cys-114, Cys-117, and Ser-324 each contribute to the [4Fe-4S] cluster site. In terms of domain architecture, Radical SAM core spans 96-313 (FSGGTATFMI…AEEGYKMGFK (218 aa)).

Belongs to the radical SAM superfamily. Lipoyl synthase family. The cofactor is [4Fe-4S] cluster.

The protein localises to the cytoplasm. The enzyme catalyses [[Fe-S] cluster scaffold protein carrying a second [4Fe-4S](2+) cluster] + N(6)-octanoyl-L-lysyl-[protein] + 2 oxidized [2Fe-2S]-[ferredoxin] + 2 S-adenosyl-L-methionine + 4 H(+) = [[Fe-S] cluster scaffold protein] + N(6)-[(R)-dihydrolipoyl]-L-lysyl-[protein] + 4 Fe(3+) + 2 hydrogen sulfide + 2 5'-deoxyadenosine + 2 L-methionine + 2 reduced [2Fe-2S]-[ferredoxin]. It functions in the pathway protein modification; protein lipoylation via endogenous pathway; protein N(6)-(lipoyl)lysine from octanoyl-[acyl-carrier-protein]: step 2/2. Its function is as follows. Catalyzes the radical-mediated insertion of two sulfur atoms into the C-6 and C-8 positions of the octanoyl moiety bound to the lipoyl domains of lipoate-dependent enzymes, thereby converting the octanoylated domains into lipoylated derivatives. This is Lipoyl synthase from Pseudomonas entomophila (strain L48).